A 206-amino-acid polypeptide reads, in one-letter code: A-type ATP synthase subunit D (206 aa).

The protein belongs to the V-ATPase D subunit family. As to quaternary structure, has multiple subunits with at least A(3), B(3), C, D, E, F, H, I and proteolipid K(x).

The protein localises to the cell membrane. Functionally, component of the A-type ATP synthase that produces ATP from ADP in the presence of a proton gradient across the membrane. This is A-type ATP synthase subunit D from Methanococcoides burtonii (strain DSM 6242 / NBRC 107633 / OCM 468 / ACE-M).